A 526-amino-acid chain; its full sequence is Amino acid transporter AVT1E (526 aa).

The tract at residues 1–49 is disordered; it reads MKQNETFDQEREDLYHTFDEEDEESQTESSVPSTPLSRNRSEDVPVPWP. Residues 8–18 show a composition bias toward basic and acidic residues; that stretch reads DQEREDLYHTF. Transmembrane regions (helical) follow at residues 140-160, 165-185, 212-232, 253-273, 278-298, 320-340, 353-373, 397-417, 436-456, 458-478, and 494-514; these read SVLNGINVLCGVALLTMPYAV, WLGLFILFSFGIITFYTGILL, ILVSILLYVELYASCVEYIIM, LDSTQVFAITTTLIVLPTVWL, LLSYLSAGGVISSILLALCLF, IPVAIGIYGFGFGSHSVFPNI, VLLISFAFCTLFYIAVAVCGF, IAVWTAVVTPMTKYALTITPV, GVSMLFRTILVLSTLVVALTV, FFATVAALIGSFIAMLIALIF, and FQIGICILIVIIGIVSGCCGT.

This sequence belongs to the amino acid/polyamine transporter 2 family. Amino acid/auxin permease (AAAP) (TC 2.A.18.5) subfamily.

Its subcellular location is the membrane. In Arabidopsis thaliana (Mouse-ear cress), this protein is Amino acid transporter AVT1E.